A 499-amino-acid polypeptide reads, in one-letter code: Cytochrome P450 81E8 (499 aa).

A helical transmembrane segment spans residues 3–23; sequence TFYLSLIISLFFLIITLKVFF. Cys436 contacts heme.

It belongs to the cytochrome P450 family. Heme serves as cofactor.

It is found in the membrane. Probable monooxygenases exhibiting no activity with isoflavones such as formononetin, biochanin A, pseudobaptigenin, daidzein, genistein, isoformononetin and prunetin, or with flavonoids including naringenin, liquiritigenin, apigenin, luteolin, or kaempferol. This Medicago truncatula (Barrel medic) protein is Cytochrome P450 81E8.